A 356-amino-acid chain; its full sequence is Histidinol-phosphate aminotransferase (356 aa).

K214 is subject to N6-(pyridoxal phosphate)lysine.

Belongs to the class-II pyridoxal-phosphate-dependent aminotransferase family. Histidinol-phosphate aminotransferase subfamily. As to quaternary structure, homodimer. Pyridoxal 5'-phosphate is required as a cofactor.

The catalysed reaction is L-histidinol phosphate + 2-oxoglutarate = 3-(imidazol-4-yl)-2-oxopropyl phosphate + L-glutamate. It participates in amino-acid biosynthesis; L-histidine biosynthesis; L-histidine from 5-phospho-alpha-D-ribose 1-diphosphate: step 7/9. The sequence is that of Histidinol-phosphate aminotransferase from Aromatoleum aromaticum (strain DSM 19018 / LMG 30748 / EbN1) (Azoarcus sp. (strain EbN1)).